Reading from the N-terminus, the 215-residue chain is Protein-L-isoaspartate O-methyltransferase (215 aa).

Ser62 is an active-site residue.

This sequence belongs to the methyltransferase superfamily. L-isoaspartyl/D-aspartyl protein methyltransferase family.

It is found in the cytoplasm. It catalyses the reaction [protein]-L-isoaspartate + S-adenosyl-L-methionine = [protein]-L-isoaspartate alpha-methyl ester + S-adenosyl-L-homocysteine. Its function is as follows. Catalyzes the methyl esterification of L-isoaspartyl residues in peptides and proteins that result from spontaneous decomposition of normal L-aspartyl and L-asparaginyl residues. It plays a role in the repair and/or degradation of damaged proteins. This Bradyrhizobium sp. (strain BTAi1 / ATCC BAA-1182) protein is Protein-L-isoaspartate O-methyltransferase.